The following is a 437-amino-acid chain: GTPase Obg (437 aa).

The 160-residue stretch at 2-161 folds into the Obg domain; sequence SDFIDRALIT…RELQLELKVI (160 aa). Positions 162 to 335 constitute an OBG-type G domain; that stretch reads ADVGLVGFPN…LQRRIVDILR (174 aa). GTP-binding positions include 168–175, 193–197, 214–217, 284–287, and 316–318; these read GFPNAGKS, FTTLS, DIPG, NKTD, and SAA. 2 residues coordinate Mg(2+): Ser175 and Thr195. The OCT domain occupies 355–433; sequence FSNIDPNDFW…IEKAELLWQD (79 aa).

Belongs to the TRAFAC class OBG-HflX-like GTPase superfamily. OBG GTPase family. In terms of assembly, monomer. Mg(2+) serves as cofactor.

It is found in the cytoplasm. Its function is as follows. An essential GTPase which binds GTP, GDP and possibly (p)ppGpp with moderate affinity, with high nucleotide exchange rates and a fairly low GTP hydrolysis rate. Plays a role in control of the cell cycle, stress response, ribosome biogenesis and in those bacteria that undergo differentiation, in morphogenesis control. This Herpetosiphon aurantiacus (strain ATCC 23779 / DSM 785 / 114-95) protein is GTPase Obg.